The following is a 337-amino-acid chain: Cytoskeleton protein RodZ (337 aa).

Residues 1-111 lie on the Cytoplasmic side of the membrane; it reads MNTEATHDQN…LGKRRKKRDG (111 aa). The HTH cro/C1-type domain occupies 19-71; sequence LRNAREQLGLSQQAVAERLCLKVSTVRDIEEDKAPADLASTFLRGYIRSYARL. A DNA-binding region (H-T-H motif) is located at residues 30-49; the sequence is QQAVAERLCLKVSTVRDIEE. Residues 112–132 form a helical; Signal-anchor for type II membrane protein membrane-spanning segment; that stretch reads WLMTFTWLVLFVVIGLSGAWW. Over 133-337 the chain is Periplasmic; it reads WQDHKAQQEE…TLNAEQSPAQ (205 aa). Polar residues predominate over residues 145-167; it reads TMADQSSAELSSNSEQGQSVPLN. Positions 145-236 are disordered; that stretch reads TMADQSSAEL…TAATTPDGAA (92 aa). Over residues 168 to 207 the composition is skewed to low complexity; it reads TSTTTDPATTSTPPASVDTTATNTQTPAVTAPAPAVDPQQ. Residues 208-218 are compositionally biased toward polar residues; that stretch reads NAVVSPSQANV. The segment covering 219 to 236 has biased composition (low complexity); it reads DTAATPAPTAATTPDGAA.

This sequence belongs to the RodZ family.

The protein resides in the cell inner membrane. Its function is as follows. Cytoskeletal protein that is involved in cell-shape control through regulation of the length of the long axis. The chain is Cytoskeleton protein RodZ from Escherichia coli O139:H28 (strain E24377A / ETEC).